Consider the following 141-residue polypeptide: Nucleoside diphosphate kinase (141 aa).

The ATP site is built by Lys-11, Phe-59, Arg-87, Thr-93, Arg-104, and Asn-114. The active-site Pros-phosphohistidine intermediate is His-117.

Belongs to the NDK family. Homotetramer. Requires Mg(2+) as cofactor.

It is found in the cytoplasm. The catalysed reaction is a 2'-deoxyribonucleoside 5'-diphosphate + ATP = a 2'-deoxyribonucleoside 5'-triphosphate + ADP. It carries out the reaction a ribonucleoside 5'-diphosphate + ATP = a ribonucleoside 5'-triphosphate + ADP. In terms of biological role, major role in the synthesis of nucleoside triphosphates other than ATP. The ATP gamma phosphate is transferred to the NDP beta phosphate via a ping-pong mechanism, using a phosphorylated active-site intermediate. In Leptothrix cholodnii (strain ATCC 51168 / LMG 8142 / SP-6) (Leptothrix discophora (strain SP-6)), this protein is Nucleoside diphosphate kinase.